We begin with the raw amino-acid sequence, 400 residues long: N(alpha)-acyl-glutamine aminoacylase (400 aa).

This sequence belongs to the peptidase M20 family. Zn(2+) serves as cofactor.

It catalyses the reaction an N(2)-acyl-L-glutamine + H2O = a carboxylate + L-glutamine. It carries out the reaction N(2)-[(2E)-3-methylhex-2-enoyl]-L-glutaminate + H2O = (2E)-3-methylhex-2-enoate + L-glutamine. The enzyme catalyses N(2)-(3-hydroxy-3-methylhexanoyl)-L-glutaminate + H2O = 3-hydroxy-3-methylhexanoate + L-glutamine. With respect to regulation, partial loss of activity with the combination Mn(2+) and chelating agents. Activity is lost in presence of 0.5 mM dithiothreitol. Hydrolyzes odorless N-alpha-acyl-L-glutamine conjugates of short- and medium-chain fatty acids, releasing human axillary malodor compounds. The enzyme is highly specific for the glutamine residue but has a low specificity for the acyl part of the substrate. The two most common products are 3-methyl-2-hexenoic acid (3M2H) and 3-hydroxy-3-methyl-hexanoic acid (HMHA), which are produced from the odorless precursors N-alpha-3-methyl-2-hexenoyl-L-glutamine (3M2H-Gln) and N-alpha-3-hydroxy-3-methylhexanoyl-L-glutamine (HMHA-Gln). In addition, over 28 different carboxylic acids contributing to human body odor are released by this enzyme from odorless axilla secretions, including several aliphatic 3-hydroxy acids with 4-Me branches, 3,4-unsaturated, 4-Et-branched aliphatic acids, and a variety of degradation products of amino acids. The sequence is that of N(alpha)-acyl-glutamine aminoacylase from Corynebacterium striatum.